A 392-amino-acid polypeptide reads, in one-letter code: uncharacterized protein (392 aa).

This sequence belongs to the chlamydial CPn_0675/CT_696/TC_0068 family.

This is an uncharacterized protein from Chlamydia trachomatis serovar D (strain ATCC VR-885 / DSM 19411 / UW-3/Cx).